Consider the following 83-residue polypeptide: Exodeoxyribonuclease 7 small subunit (83 aa).

Belongs to the XseB family. In terms of assembly, heterooligomer composed of large and small subunits.

The protein localises to the cytoplasm. It carries out the reaction Exonucleolytic cleavage in either 5'- to 3'- or 3'- to 5'-direction to yield nucleoside 5'-phosphates.. In terms of biological role, bidirectionally degrades single-stranded DNA into large acid-insoluble oligonucleotides, which are then degraded further into small acid-soluble oligonucleotides. In Rhizobium etli (strain ATCC 51251 / DSM 11541 / JCM 21823 / NBRC 15573 / CFN 42), this protein is Exodeoxyribonuclease 7 small subunit.